Here is a 461-residue protein sequence, read N- to C-terminus: MRVLIKNGTVVNADGQAKQDLLIESGIVRQLGNNISPQLPYEEIDATGCYVFPGGVDVHTHFNIDVGIARSCDDFFTGTRAAVCGGTTTIIDHMGFGPNGCRLRHQLEVYRGYAAHKAVIDYSFHGVIQHINHAILDEIPMMVEEGLSSFKLYLTYQYKLNDDEVLQALRRLHESGALTTVHPENDAAIASKRAEFIAAGLTAPRYHALSRPLECEAEAIARMINLAQIAGNAPLYIVHLSNGLGLDYLRLARANHQPVWVETCPQYLLLDERSYDTEDGMKFILSPPLRNIREQDKLWCGISDGAIDVVATDHCTFSMAQRLQISKGDFSRCPNGLPGVENRMQLLFSSGVMTGRITPERFVELTSAMPARLFGLWPQKGLLAPGSDGDVVIIDPRQSQQIQHRHLHDNADYSPWEGFTCQGAIVRTLSRGETIFCDGTFTGKAGRGRFLRRKPFVPPVL.

Positions 59, 61, and 151 each coordinate a divalent metal cation. Lysine 151 bears the N6-carboxylysine mark. Tyrosine 156 lines the substrate pocket. A divalent metal cation-binding residues include histidine 182 and histidine 239. Serine 286 contributes to the substrate binding site. A divalent metal cation is bound at residue aspartate 313. Asparagine 335 is a substrate binding site.

The protein belongs to the metallo-dependent hydrolases superfamily. Hydantoinase/dihydropyrimidinase family. In terms of assembly, homotetramer. Requires a divalent metal cation as cofactor. In terms of processing, carboxylation allows a single lysine to coordinate two divalent metal cations.

It catalyses the reaction D-5-phenylhydantoin + H2O = N-carbamoyl-D-phenylglycine + H(+). Its function is as follows. Catalyzes the stereospecific hydrolysis of the cyclic amide bond of D-hydantoin derivatives with an aromatic side chains at the 5'-position. Has no activity on dihydropyrimidines. The physiological function is unknown. The sequence is that of D-phenylhydantoinase from Escherichia coli (strain SE11).